Here is a 211-residue protein sequence, read N- to C-terminus: Riboflavin transporter RibU (211 aa).

5 consecutive transmembrane segments (helical) span residues 34-54, 66-86, 104-124, 134-154, and 180-200; these read AYIA…FPLI, ILPV…GVLL, IGLP…SYFW, ILGS…LNYI, and AMVV…FALI.

Belongs to the prokaryotic riboflavin transporter (P-RFT) (TC 2.A.87) family. As to quaternary structure, forms a stable energy-coupling factor (ECF) transporter complex composed of 2 membrane-embedded substrate-binding proteins (S component), 2 ATP-binding proteins (A component) and 2 transmembrane proteins (T component) upon coexpression of the 4 components in E.coli.

Its subcellular location is the cell membrane. Its function is as follows. Substrate-binding (S) component of an energy-coupling factor (ECF) ABC-transporter complex. Mediates riboflavin uptake, may also transport FMN and roseoflavin. Probably a riboflavin-binding protein that interacts with the energy-coupling factor (ECF) ABC-transporter complex. Unlike classic ABC transporters this ECF transporter provides the energy necessary to transport a number of different substrates. The substrates themselves are bound by transmembrane, not extracytoplasmic soluble proteins. Expression of the complex plus RibU in E.coli allows riboflavin uptake. In Streptococcus thermophilus (strain ATCC BAA-250 / LMG 18311), this protein is Riboflavin transporter RibU (ribU).